The primary structure comprises 538 residues: Probable bifunctional riboflavin biosynthesis protein RIBA 1, chloroplastic (538 aa).

Positions 1–16 (MSRLSSIYSQHRTSGL) are enriched in polar residues. A disordered region spans residues 1 to 29 (MSRLSSIYSQHRTSGLRSDRSIMPNSTSN). The N-terminal 73 residues, 1-73 (MSRLSSIYSQ…NGQASPSKVV (73 aa)), are a transit peptide targeting the chloroplast. Residues 46 to 311 (RNFHISHAVG…IADLIRYRRK (266 aa)) form a DHBP synthase region. D-ribulose 5-phosphate contacts are provided by residues 134-135 (RE), Asp-139, 249-253 (RAGHT), and Glu-273. A Mg(2+)-binding site is contributed by Glu-135. A Mg(2+)-binding site is contributed by His-252. Residues 312-530 (RDRLVERVCV…DGGIKKEQDQ (219 aa)) are GTP cyclohydrolase II. Position 362 to 366 (362 to 366 (RVHSE)) interacts with GTP. Zn(2+) is bound by residues Cys-367, Cys-378, and Cys-380. GTP contacts are provided by residues Gln-383, 406–408 (EGR), and Thr-428. Catalysis depends on Asp-440, which acts as the Proton acceptor; for GTP cyclohydrolase activity. Arg-442 (nucleophile; for GTP cyclohydrolase activity) is an active-site residue. 2 residues coordinate GTP: Thr-463 and Lys-468. Residues 506 to 538 (HVYGTRPSGNTSTLADGGIKKEQDQIDSASEQE) are disordered.

The protein in the N-terminal section; belongs to the DHBP synthase family. In the C-terminal section; belongs to the GTP cyclohydrolase II family. Requires Mg(2+) as cofactor. It depends on Mn(2+) as a cofactor. Zn(2+) serves as cofactor.

It localises to the plastid. It is found in the chloroplast. The enzyme catalyses D-ribulose 5-phosphate = (2S)-2-hydroxy-3-oxobutyl phosphate + formate + H(+). It catalyses the reaction GTP + 4 H2O = 2,5-diamino-6-hydroxy-4-(5-phosphoribosylamino)-pyrimidine + formate + 2 phosphate + 3 H(+). The protein operates within cofactor biosynthesis; riboflavin biosynthesis; 2-hydroxy-3-oxobutyl phosphate from D-ribulose 5-phosphate: step 1/1. It participates in cofactor biosynthesis; riboflavin biosynthesis; 5-amino-6-(D-ribitylamino)uracil from GTP: step 1/4. Involved in riboflavin biosynthesis. Catalyzes both the conversion of D-ribulose 5-phosphate to formate and 3,4-dihydroxy-2-butanone 4-phosphate and the conversion of GTP to 2,5-diamino-6-ribosylamino-4(3H)-pyrimidinone 5'-phosphate (DARP), formate and pyrophosphate. In Oryza sativa subsp. japonica (Rice), this protein is Probable bifunctional riboflavin biosynthesis protein RIBA 1, chloroplastic (RIBA1).